The primary structure comprises 103 residues: Co-chaperonin GroES (103 aa).

The protein belongs to the GroES chaperonin family. In terms of assembly, heptamer of 7 subunits arranged in a ring. Interacts with the chaperonin GroEL.

The protein localises to the cytoplasm. In terms of biological role, together with the chaperonin GroEL, plays an essential role in assisting protein folding. The GroEL-GroES system forms a nano-cage that allows encapsulation of the non-native substrate proteins and provides a physical environment optimized to promote and accelerate protein folding. GroES binds to the apical surface of the GroEL ring, thereby capping the opening of the GroEL channel. The sequence is that of Co-chaperonin GroES from Parasynechococcus marenigrum (strain WH8102).